The chain runs to 257 residues: Ribonuclease HII (257 aa).

One can recognise an RNase H type-2 domain in the interval 72–257 (TYIAGIDEVG…FAPIKDMIQK (186 aa)). Positions 78, 79, and 170 each coordinate a divalent metal cation.

This sequence belongs to the RNase HII family. Requires Mn(2+) as cofactor. Mg(2+) is required as a cofactor.

The protein resides in the cytoplasm. The enzyme catalyses Endonucleolytic cleavage to 5'-phosphomonoester.. Functionally, endonuclease that specifically degrades the RNA of RNA-DNA hybrids. This is Ribonuclease HII from Bacillus cereus (strain B4264).